We begin with the raw amino-acid sequence, 160 residues long: Dihydrofolate reductase (160 aa).

Residues Thr2–Arg159 enclose the DHFR domain. Ile6 contributes to the substrate binding site. NADP(+)-binding positions include Ala8 and Val14–Gln20. Asp28 provides a ligand contact to substrate. Residue Lys46–Thr47 participates in NADP(+) binding. Residues Arg53 and Arg58 each coordinate substrate. NADP(+) is bound by residues Ser64–Arg65 and Gly96–Gln103. Residue Thr114 coordinates substrate.

This sequence belongs to the dihydrofolate reductase family.

The enzyme catalyses (6S)-5,6,7,8-tetrahydrofolate + NADP(+) = 7,8-dihydrofolate + NADPH + H(+). The protein operates within cofactor biosynthesis; tetrahydrofolate biosynthesis; 5,6,7,8-tetrahydrofolate from 7,8-dihydrofolate: step 1/1. Its function is as follows. Key enzyme in folate metabolism. Catalyzes an essential reaction for de novo glycine and purine synthesis, and for DNA precursor synthesis. The polypeptide is Dihydrofolate reductase (folA) (Haemophilus influenzae (strain ATCC 51907 / DSM 11121 / KW20 / Rd)).